Reading from the N-terminus, the 251-residue chain is Triosephosphate isomerase (251 aa).

9–11 (NWK) contributes to the substrate binding site. H95 (electrophile) is an active-site residue. The Proton acceptor role is filled by E167. Substrate is bound by residues G173, S213, and 234–235 (GG). S213 carries the post-translational modification Phosphoserine.

Belongs to the triosephosphate isomerase family. As to quaternary structure, homodimer.

It is found in the cytoplasm. It catalyses the reaction D-glyceraldehyde 3-phosphate = dihydroxyacetone phosphate. The protein operates within carbohydrate biosynthesis; gluconeogenesis. It participates in carbohydrate degradation; glycolysis; D-glyceraldehyde 3-phosphate from glycerone phosphate: step 1/1. Functionally, involved in the gluconeogenesis. Catalyzes stereospecifically the conversion of dihydroxyacetone phosphate (DHAP) to D-glyceraldehyde-3-phosphate (G3P). This Bacillus cereus (strain B4264) protein is Triosephosphate isomerase.